We begin with the raw amino-acid sequence, 171 residues long: Peptide methionine sulfoxide reductase MsrA (171 aa).

Cys13 is a catalytic residue.

Belongs to the MsrA Met sulfoxide reductase family.

The enzyme catalyses L-methionyl-[protein] + [thioredoxin]-disulfide + H2O = L-methionyl-(S)-S-oxide-[protein] + [thioredoxin]-dithiol. The catalysed reaction is [thioredoxin]-disulfide + L-methionine + H2O = L-methionine (S)-S-oxide + [thioredoxin]-dithiol. In terms of biological role, has an important function as a repair enzyme for proteins that have been inactivated by oxidation. Catalyzes the reversible oxidation-reduction of methionine sulfoxide in proteins to methionine. In Mycobacterium ulcerans (strain Agy99), this protein is Peptide methionine sulfoxide reductase MsrA.